The sequence spans 287 residues: Small ribosomal subunit biogenesis GTPase RsgA (287 aa).

One can recognise a CP-type G domain in the interval 61–218 (SSELIRPTVA…LVDTPGFTTL (158 aa)). GTP contacts are provided by residues 110–113 (NKED) and 161–169 (GPSGAGKST). The Zn(2+) site is built by cysteine 242, cysteine 247, histidine 249, and cysteine 255.

Belongs to the TRAFAC class YlqF/YawG GTPase family. RsgA subfamily. Monomer. Associates with 30S ribosomal subunit, binds 16S rRNA. Zn(2+) is required as a cofactor.

Its subcellular location is the cytoplasm. Functionally, one of several proteins that assist in the late maturation steps of the functional core of the 30S ribosomal subunit. Helps release RbfA from mature subunits. May play a role in the assembly of ribosomal proteins into the subunit. Circularly permuted GTPase that catalyzes slow GTP hydrolysis, GTPase activity is stimulated by the 30S ribosomal subunit. The chain is Small ribosomal subunit biogenesis GTPase RsgA from Clostridium perfringens (strain SM101 / Type A).